The sequence spans 74 residues: MNFLLDLFTNWTFDKVLDYTLAAVIWSVFKSRSKQNKYPGYFEKIRRYRNLHPLLRSLSMRVLLSITIHPYMFS.

The sequence is that of Putative protein YozX (yozX) from Bacillus subtilis (strain 168).